The primary structure comprises 290 residues: Arylamine N-acetyltransferase, pineal gland isozyme NAT-10 (290 aa).

C68 serves as the catalytic Acyl-thioester intermediate. Residues H107 and D122 contribute to the active site.

Belongs to the arylamine N-acetyltransferase family.

It carries out the reaction an arylamine + acetyl-CoA = an N-acetylarylamine + CoA. The sequence is that of Arylamine N-acetyltransferase, pineal gland isozyme NAT-10 from Gallus gallus (Chicken).